We begin with the raw amino-acid sequence, 63 residues long: Large ribosomal subunit protein bL28 (63 aa).

Belongs to the bacterial ribosomal protein bL28 family.

The polypeptide is Large ribosomal subunit protein bL28 (Petrotoga mobilis (strain DSM 10674 / SJ95)).